Here is a 185-residue protein sequence, read N- to C-terminus: MSNHQYAADNPSFKKRNYKPFIIIVTIVINGLVVLLSGMPGYENFNAFDVKVLPLMNAIFNSFTFLFLLAALIAILKKNVVVHRRFIYAAFITTTLFLVTYVAHHFLSASTPYGGSGIMAGIYYFILITHIVLAAIIVPLALTSVARAWNMENERHRKIARWTMPIWLYVSLTGVLVYVMISPYY.

This is an uncharacterized protein from Alkalihalophilus pseudofirmus (strain ATCC BAA-2126 / JCM 17055 / OF4) (Bacillus pseudofirmus).